Reading from the N-terminus, the 172-residue chain is 6,7-dimethyl-8-ribityllumazine synthase (172 aa).

Residues F24, A58–E60, and A82–I84 each bind 5-amino-6-(D-ribitylamino)uracil. E87–T88 contributes to the (2S)-2-hydroxy-3-oxobutyl phosphate binding site. H90 functions as the Proton donor in the catalytic mechanism. N115 contributes to the 5-amino-6-(D-ribitylamino)uracil binding site. R129 serves as a coordination point for (2S)-2-hydroxy-3-oxobutyl phosphate. The disordered stretch occupies residues A150 to A172. Residues L154–A172 are compositionally biased toward acidic residues.

It belongs to the DMRL synthase family.

It carries out the reaction (2S)-2-hydroxy-3-oxobutyl phosphate + 5-amino-6-(D-ribitylamino)uracil = 6,7-dimethyl-8-(1-D-ribityl)lumazine + phosphate + 2 H2O + H(+). It participates in cofactor biosynthesis; riboflavin biosynthesis; riboflavin from 2-hydroxy-3-oxobutyl phosphate and 5-amino-6-(D-ribitylamino)uracil: step 1/2. In terms of biological role, catalyzes the formation of 6,7-dimethyl-8-ribityllumazine by condensation of 5-amino-6-(D-ribitylamino)uracil with 3,4-dihydroxy-2-butanone 4-phosphate. This is the penultimate step in the biosynthesis of riboflavin. The polypeptide is 6,7-dimethyl-8-ribityllumazine synthase (Burkholderia multivorans (strain ATCC 17616 / 249)).